Here is a 454-residue protein sequence, read N- to C-terminus: Alpha-1,3-mannosyl-glycoprotein 4-beta-N-acetylglucosaminyltransferase C (454 aa).

Residues 1 to 6 are Cytoplasmic-facing; sequence MRCHLK. A helical; Signal-anchor for type II membrane protein membrane pass occupies residues 7-24; it reads KWVVVAAGLSILTSLYVY. Topologically, residues 25 to 454 are lumenal; that stretch reads MQRAQSGNLK…VWTVKEDKTI (430 aa). N-linked (GlcNAc...) asparagine glycosylation is found at Asn58 and Asn189.

The protein belongs to the glycosyltransferase 54 family. The cofactor is a divalent metal cation.

It localises to the golgi apparatus membrane. The enzyme catalyses N(4)-{beta-D-GlcNAc-(1-&gt;2)-alpha-D-Man-(1-&gt;3)-[beta-D-GlcNAc-(1-&gt;2)-alpha-D-Man-(1-&gt;6)]-beta-D-Man-(1-&gt;4)-beta-D-GlcNAc-(1-&gt;4)-beta-D-GlcNAc}-L-asparaginyl-[protein] + UDP-N-acetyl-alpha-D-glucosamine = N(4)-{beta-D-GlcNAc-(1-&gt;2)-[beta-D-GlcNAc-(1-&gt;4)]-alpha-D-Man-(1-&gt;3)-[beta-D-GlcNAc-(1-&gt;2)-alpha-D-Man-(1-&gt;6)]-beta-D-Man-(1-&gt;4)-beta-D-GlcNAc-(1-&gt;4)-beta-D-GlcNAc}-L-asparaginyl-[protein] + UDP + H(+). Its pathway is protein modification; protein glycosylation. In terms of biological role, glycosyltransferase that participates in the transfer of N-acetylglucosamine (GlcNAc) to the core mannose residues of N-linked glycans. Catalyzes the formation of the GlcNAcbeta1-4 branch on the GlcNAcbeta1-2Manalpha1-3 arm of the core structure of N-linked glycans. This is Alpha-1,3-mannosyl-glycoprotein 4-beta-N-acetylglucosaminyltransferase C (mgat4c) from Danio rerio (Zebrafish).